Here is a 227-residue protein sequence, read N- to C-terminus: 2-C-methyl-D-erythritol 4-phosphate cytidylyltransferase (227 aa).

The protein belongs to the IspD/TarI cytidylyltransferase family. IspD subfamily.

The enzyme catalyses 2-C-methyl-D-erythritol 4-phosphate + CTP + H(+) = 4-CDP-2-C-methyl-D-erythritol + diphosphate. The protein operates within isoprenoid biosynthesis; isopentenyl diphosphate biosynthesis via DXP pathway; isopentenyl diphosphate from 1-deoxy-D-xylulose 5-phosphate: step 2/6. Catalyzes the formation of 4-diphosphocytidyl-2-C-methyl-D-erythritol from CTP and 2-C-methyl-D-erythritol 4-phosphate (MEP). In Dehalococcoides mccartyi (strain ATCC BAA-2266 / KCTC 15142 / 195) (Dehalococcoides ethenogenes (strain 195)), this protein is 2-C-methyl-D-erythritol 4-phosphate cytidylyltransferase.